We begin with the raw amino-acid sequence, 287 residues long: Cbb3-type cytochrome c oxidase subunit FixP (287 aa).

Over 1–33 (MSQKHIDELSGVETTGHEWDGIQELNNPMPRWW) the chain is Cytoplasmic. The helical transmembrane segment at 34 to 54 (IWTFYVTILWAIGYAIAYPAI) threads the bilayer. The Periplasmic portion of the chain corresponds to 55–287 (PMITSATNGY…IFVHALGGGT (233 aa)). Cytochrome c domains lie at 108-196 (FAIA…WGLT) and 203-284 (GLAA…HALG). Heme c contacts are provided by cysteine 121, cysteine 124, histidine 125, methionine 173, cysteine 216, cysteine 219, histidine 220, and methionine 261.

It belongs to the CcoP / FixP family. Component of the cbb3-type cytochrome c oxidase at least composed of FixN, FixO, FixQ and FixP. Heme c serves as cofactor.

The protein localises to the cell inner membrane. Its pathway is energy metabolism; oxidative phosphorylation. In terms of biological role, C-type cytochrome. Part of the cbb3-type cytochrome c oxidase complex. FixP subunit is required for transferring electrons from donor cytochrome c via its heme groups to FixO subunit. From there, electrons are shuttled to the catalytic binuclear center of FixN subunit where oxygen reduction takes place. The complex also functions as a proton pump. This Rhizobium etli (strain ATCC 51251 / DSM 11541 / JCM 21823 / NBRC 15573 / CFN 42) protein is Cbb3-type cytochrome c oxidase subunit FixP.